Reading from the N-terminus, the 302-residue chain is ATP synthase mitochondrial F1 complex assembly factor 1 (302 aa).

The protein belongs to the ATP11 family. As to quaternary structure, interacts with ATP5F1B; involved in the assembly of the F1 component of the mitochondrial ATP synthase (ATPase).

The protein resides in the mitochondrion inner membrane. Functionally, has a complex stabilizing activity in the assembly of the mitochondrial F1-F0 complex. This is ATP synthase mitochondrial F1 complex assembly factor 1 (atpaf1) from Danio rerio (Zebrafish).